Consider the following 114-residue polypeptide: Biofilm growth-associated repressor (114 aa).

The HTH arsR-type domain maps to 17 to 111; it reads DMEKRANEVA…ALYTIFCAQE (95 aa). The H-T-H motif DNA-binding region spans 51–74; sequence VGELEQQIGIGQPTLSQQLGVLRE.

Represses an operon that comprises itself, XF_0764, XF_0765, XF_0766 and blh. Binds to a palindromic AT-rich sequence spanning the -10 region of the blh promoter and blocks transcription of the operon. In Xylella fastidiosa (strain 9a5c), this protein is Biofilm growth-associated repressor (bigR).